A 90-amino-acid chain; its full sequence is Small ribosomal subunit protein uS15 (90 aa).

The protein belongs to the universal ribosomal protein uS15 family. Part of the 30S ribosomal subunit. Forms a bridge to the 50S subunit in the 70S ribosome, contacting the 23S rRNA.

In terms of biological role, one of the primary rRNA binding proteins, it binds directly to 16S rRNA where it helps nucleate assembly of the platform of the 30S subunit by binding and bridging several RNA helices of the 16S rRNA. Its function is as follows. Forms an intersubunit bridge (bridge B4) with the 23S rRNA of the 50S subunit in the ribosome. This chain is Small ribosomal subunit protein uS15, found in Campylobacter curvus (strain 525.92).